The chain runs to 338 residues: UDP-N-acetylenolpyruvoylglucosamine reductase (338 aa).

The 172-residue stretch at 17 to 188 (IAARTDWWID…MYVDYRLRLR (172 aa)) folds into the FAD-binding PCMH-type domain. The active site involves R164. Catalysis depends on S237, which acts as the Proton donor. The active site involves E333.

It belongs to the MurB family. FAD is required as a cofactor.

It localises to the cytoplasm. The enzyme catalyses UDP-N-acetyl-alpha-D-muramate + NADP(+) = UDP-N-acetyl-3-O-(1-carboxyvinyl)-alpha-D-glucosamine + NADPH + H(+). It functions in the pathway cell wall biogenesis; peptidoglycan biosynthesis. Its function is as follows. Cell wall formation. In Porphyromonas gingivalis (strain ATCC 33277 / DSM 20709 / CIP 103683 / JCM 12257 / NCTC 11834 / 2561), this protein is UDP-N-acetylenolpyruvoylglucosamine reductase.